The following is a 118-amino-acid chain: Large ribosomal subunit protein uL18 (118 aa).

The protein belongs to the universal ribosomal protein uL18 family. In terms of assembly, part of the 50S ribosomal subunit; part of the 5S rRNA/L5/L18/L25 subcomplex. Contacts the 5S and 23S rRNAs.

In terms of biological role, this is one of the proteins that bind and probably mediate the attachment of the 5S RNA into the large ribosomal subunit, where it forms part of the central protuberance. The polypeptide is Large ribosomal subunit protein uL18 (Rickettsia akari (strain Hartford)).